Here is a 607-residue protein sequence, read N- to C-terminus: Elongation factor 4 (607 aa).

Residues glutamate 11 to threonine 193 enclose the tr-type G domain. GTP contacts are provided by residues aspartate 23 to threonine 28 and asparagine 140 to aspartate 143.

This sequence belongs to the TRAFAC class translation factor GTPase superfamily. Classic translation factor GTPase family. LepA subfamily.

Its subcellular location is the cell membrane. The catalysed reaction is GTP + H2O = GDP + phosphate + H(+). Required for accurate and efficient protein synthesis under certain stress conditions. May act as a fidelity factor of the translation reaction, by catalyzing a one-codon backward translocation of tRNAs on improperly translocated ribosomes. Back-translocation proceeds from a post-translocation (POST) complex to a pre-translocation (PRE) complex, thus giving elongation factor G a second chance to translocate the tRNAs correctly. Binds to ribosomes in a GTP-dependent manner. This is Elongation factor 4 from Streptococcus pneumoniae (strain P1031).